The primary structure comprises 262 residues: Leucine-rich repeat-containing protein 18 (262 aa).

7 LRR repeats span residues 28 to 49 (GRKRLDLSKMGITTFPKCILRL), 51 to 72 (DIDELDLSRNMIRKIPDSIAKF), 74 to 95 (NLRWLDLHSNYIDKLPESIGQM), 97 to 118 (SLLFLNVSNNRLTTNGLPVELN), 122 to 144 (NIRTVNLGLNHLDSVPTTLGALK), 145 to 167 (ELHEVGLHDNLLTTIPASIAKLP), and 168 to 189 (KLKKLNIKRNPFPNADESEMFV).

Exclusively expressed in spermatocytes and roud spermatids within seminiferous tubules during spermatogenesis.

It is found in the cytoplasm. May be involved in the regulation of spermatogenesis and sperm maturation. The sequence is that of Leucine-rich repeat-containing protein 18 (Lrrc18) from Mus musculus (Mouse).